The chain runs to 442 residues: DMATS-type prenyltransferase mfmD (442 aa).

Belongs to the tryptophan dimethylallyltransferase family.

The protein operates within secondary metabolite biosynthesis; terpenoid biosynthesis. In terms of biological role, prenyltransferase; part of the gene cluster that mediates the biosynthesis of the phthalide-terpenoid hybrid 11'-O-desmethylfendlerol. Within the pathway, mfmD is responsible for farnesylation of the cyclopolic acid intermediate via an O-prenylation reaction. The biosynthesis of 11'-O-desmethylfendlerol begins with the NR-PKS mfmB that forms 3,5-dimethylorsellinic acid (DMOA), which is then transformed into the phthalide 5,7-dihydroxy-4-(hydroxymethyl)-6-methylphthalide by the cytochrome P450 monooxygenase mfmA and the hydrolase mfmC. Subsequently, the methyltransferase mfmE catalyzes 7-O-methylation to yield 5-hydroxy-4-(hydroxymethyl)-7-methoxy-6-methylphthalide, which undergoes C-3 hydroxylation by the cytochrome P450 monooxygenase mfmF. The resultant cyclopolic acid (2,5-dihydroxy-4-(hydroxymethyl)-7-methoxy-6-methylphthalide) is then farnesylated by the DMATS-type prenyltransferase mfmD to afford 5-O-farnesylcyclopolic acid. Finally, the Pyr4-family terpene cyclase mfmH cyclizes the farnesyl moiety of 5-O-farnesylcyclopolic acid into a drimane-like structure, thus completing the biosynthesis of 11'-O-desmethylfendlerol. This chain is DMATS-type prenyltransferase mfmD, found in Annulohypoxylon moriforme (Filamentous fungus).